A 142-amino-acid polypeptide reads, in one-letter code: Conidial pigment biosynthesis dehydratase EthD (142 aa).

The 97-residue stretch at 25 to 121 folds into the EthD domain; that stretch reads PGMSEAAYRE…PDHQKFADTS (97 aa).

Belongs to the tpcK family.

The protein operates within pigment biosynthesis. Functionally, dehydratase; part of the Pks1 gene cluster that mediates the biosynthesis of an anthraquinone derivative pigment that contributes to conidial pigmentation that provides protection from UV radiation, heat and cold stress. The polyketide synthase Pks1 produces 1-acetyl-2,4,6,8-tetrahydroxy-9,10-anthraquinone though condensation of acetyl-CoA with malonyl-CoA. The dehydratase EthD and the laccase Mlac1 further convert the anthraquinone derivative into the final conidial pigment. This Metarhizium robertsii (strain ARSEF 23 / ATCC MYA-3075) (Metarhizium anisopliae (strain ARSEF 23)) protein is Conidial pigment biosynthesis dehydratase EthD.